The primary structure comprises 537 residues: Oviduct-specific glycoprotein (537 aa).

The first 18 residues, 1–18, serve as a signal peptide directing secretion; that stretch reads LLLCVGLLLVLKHHDGAA. One can recognise a GH18 domain in the interval 19-382; sequence HKLVCYFTNW…HTLNNLLVND (364 aa). The cysteines at positions 23 and 48 are disulfide-linked. Chitin contacts are provided by residues 68 to 69, 95 to 98, Tyr-139, 208 to 211, and Trp-352; these read PQ, GGWN, and LSYD. Asn-399 carries an N-linked (GlcNAc...) asparagine glycan. Disordered regions lie at residues 446-475 and 498-537; these read EIAT…GEKP and TGQK…ERRL. The span at 528 to 537 shows a compositional bias: basic and acidic residues; the sequence is GRAETLERRL.

It belongs to the glycosyl hydrolase 18 family. Oviduct.

Its subcellular location is the cytoplasmic vesicle. The protein resides in the secretory vesicle. Functionally, binds to oocyte zona pellucida in vivo. May play a role in the fertilization process and/or early embryonic development. The protein is Oviduct-specific glycoprotein (OVGP1) of Bos taurus (Bovine).